We begin with the raw amino-acid sequence, 310 residues long: Integrin-binding sialoprotein (310 aa).

An N-terminal signal peptide occupies residues 1–16; it reads MKTVLILLSILGMACA. Ser31, Ser62, Ser67, Ser75, Ser76, Ser98, and Ser106 each carry phosphoserine. Residues 61–284 are disordered; the sequence is QSSSDSSEEN…NGDPRGDNYR (224 aa). The span at 62–74 shows a compositional bias: low complexity; sequence SSSDSSEENGNGD. Acidic residues-rich tracts occupy residues 75-87 and 96-108; these read SSEE…ETSN and EDSD…ESEA. The N-linked (GlcNAc...) asparagine glycan is linked to Asn110. The residue at position 144 (Thr144) is a Phosphothreonine. Positions 152 to 174 are enriched in acidic residues; sequence DESDEEEEEEEEEENEAEVDDNE. Position 154 is a phosphoserine (Ser154). Over residues 175–187 the composition is skewed to polar residues; it reads QGINGTSSNSTEV. Residues Asn178 and Asn183 are each glycosylated (N-linked (GlcNAc...) asparagine). A compositionally biased stretch (acidic residues) spans 198-208; it reads NGEEDGEEESV. Residues 209–227 are compositionally biased toward polar residues; sequence TEANTEGITVAGETTTSPN. Ser273 carries the post-translational modification Phosphoserine. The Integrin-binding motif signature appears at 279–281; it reads RGD. Phosphoserine is present on Ser300. A sulfotyrosine mark is found at Tyr306 and Tyr307.

As to quaternary structure, monomer. Interacts with integrins; the interaction promotes cell adhesion.

Its subcellular location is the secreted. Its function is as follows. Binds tightly to hydroxyapatite. Appears to form an integral part of the mineralized matrix. Probably important to cell-matrix interaction. Promotes adhesion and migration of various cells via the alpha-V/beta-3 integrin receptor (ITGAV:ITGB3). The polypeptide is Integrin-binding sialoprotein (IBSP) (Bos taurus (Bovine)).